Consider the following 618-residue polypeptide: Paraneoplastic antigen-like protein 5 (618 aa).

Residues 390-399 (AGEEGQRKES) show a composition bias toward basic and acidic residues. Disordered regions lie at residues 390 to 409 (AGEE…EPDE), 451 to 475 (RDTL…EGQQ), and 519 to 549 (SMIT…ELRM).

This sequence belongs to the PNMA family. In terms of tissue distribution, restricted to testis, where expression is low. Not detected in the brain.

It localises to the nucleus. The polypeptide is Paraneoplastic antigen-like protein 5 (Pnma5) (Mus musculus (Mouse)).